The following is an 88-amino-acid chain: RNA-binding protein Hfq (88 aa).

Residues 9–68 form the Sm domain; it reads DPYLNVLRKERVPVSIYLVNGIKLQGQVESFDQFVVLLKNTVSQMVYKHAISTVVPSRAV.

This sequence belongs to the Hfq family. As to quaternary structure, homohexamer.

Its function is as follows. RNA chaperone that binds small regulatory RNA (sRNAs) and mRNAs to facilitate mRNA translational regulation in response to envelope stress, environmental stress and changes in metabolite concentrations. Also binds with high specificity to tRNAs. In Cellvibrio japonicus (strain Ueda107) (Pseudomonas fluorescens subsp. cellulosa), this protein is RNA-binding protein Hfq.